A 293-amino-acid chain; its full sequence is 4-diphosphocytidyl-2-C-methyl-D-erythritol kinase (293 aa).

Lys16 is an active-site residue. 99-109 is a binding site for ATP; it reads PMGAGLGGGSS. Asp141 is a catalytic residue.

The protein belongs to the GHMP kinase family. IspE subfamily.

The catalysed reaction is 4-CDP-2-C-methyl-D-erythritol + ATP = 4-CDP-2-C-methyl-D-erythritol 2-phosphate + ADP + H(+). Its pathway is isoprenoid biosynthesis; isopentenyl diphosphate biosynthesis via DXP pathway; isopentenyl diphosphate from 1-deoxy-D-xylulose 5-phosphate: step 3/6. In terms of biological role, catalyzes the phosphorylation of the position 2 hydroxy group of 4-diphosphocytidyl-2C-methyl-D-erythritol. This chain is 4-diphosphocytidyl-2-C-methyl-D-erythritol kinase, found in Burkholderia pseudomallei (strain 668).